The primary structure comprises 302 residues: D-alanine--D-alanine ligase (302 aa).

The ATP-grasp domain maps to 100–295 (KTVFDHHGIL…FNELIAKLIE (196 aa)). 126–180 (QDLEPPVFIKPNSGGSSLGMTFARTAEELEKGIETVFSLGDSALVEEYTKGIEVT) serves as a coordination point for ATP. 3 residues coordinate Mg(2+): Asp-250, Glu-262, and Asn-264.

Belongs to the D-alanine--D-alanine ligase family. Mg(2+) serves as cofactor. Mn(2+) is required as a cofactor.

It localises to the cytoplasm. It catalyses the reaction 2 D-alanine + ATP = D-alanyl-D-alanine + ADP + phosphate + H(+). Its pathway is cell wall biogenesis; peptidoglycan biosynthesis. Functionally, cell wall formation. The protein is D-alanine--D-alanine ligase of Maridesulfovibrio salexigens (strain ATCC 14822 / DSM 2638 / NCIMB 8403 / VKM B-1763) (Desulfovibrio salexigens).